The sequence spans 298 residues: Apolipoprotein E (298 aa).

Positions 1 to 18 (MKILWAALVLTLLAGCRA) are cleaved as a signal peptide. 6 consecutive repeat copies span residues 74 to 95 (LLME…KEVG), 96 to 117 (PMAE…ARLA), 118 to 139 (GDME…AMLG), 140 to 161 (QSSE…KRLQ), 162 to 183 (RDAE…EGAE), and 223 to 244 (GRLE…EQME). The segment at 74 to 244 (LLMEDTMKEL…RLEEVREQME (171 aa)) is 8 X 22 AA approximate tandem repeats. Residue Met137 is modified to Methionine sulfoxide. Ser141 is modified (phosphoserine). The interval 152-162 (HLRKLRKRLQR) is LDL and other lipoprotein receptors binding. 156-159 (LRKR) contributes to the heparin binding site. The lipid-binding and lipoprotein association stretch occupies residues 204 to 272 (ALTSHPLRER…SWFEPMVEDL (69 aa)). 218-225 (GEQVRGRL) lines the heparin pocket. The specificity for association with VLDL stretch occupies residues 260–272 (RLKSWFEPMVEDL).

Belongs to the apolipoprotein A1/A4/E family. In terms of assembly, homotetramer. May interact with ABCA1; functionally associated with ABCA1 in the biogenesis of HDLs. May interact with APP/A4 amyloid-beta peptide; the interaction is extremely stable in vitro but its physiological significance is unclear. May interact with MAPT. May interact with MAP2. In the cerebrospinal fluid, interacts with secreted SORL1. Interacts with PMEL; this allows the loading of PMEL luminal fragment on ILVs to induce fibril nucleation. Post-translationally, APOE exists as multiple glycosylated and sialylated glycoforms within cells and in plasma. The extent of glycosylation and sialylation are tissue and context specific. In terms of processing, glycated in plasma VLDL. Phosphorylated by FAM20C in the extracellular medium.

It localises to the secreted. Its subcellular location is the extracellular space. The protein localises to the extracellular matrix. It is found in the extracellular vesicle. The protein resides in the endosome. It localises to the multivesicular body. Functionally, APOE is an apolipoprotein, a protein associating with lipid particles, that mainly functions in lipoprotein-mediated lipid transport between organs via the plasma and interstitial fluids. APOE is a core component of plasma lipoproteins and is involved in their production, conversion and clearance. Apolipoproteins are amphipathic molecules that interact both with lipids of the lipoprotein particle core and the aqueous environment of the plasma. As such, APOE associates with chylomicrons, chylomicron remnants, very low density lipoproteins (VLDL) and intermediate density lipoproteins (IDL) but shows a preferential binding to high-density lipoproteins (HDL). It also binds a wide range of cellular receptors including the LDL receptor/LDLR, the LDL receptor-related proteins LRP1, LRP2 and LRP8 and the very low-density lipoprotein receptor/VLDLR that mediate the cellular uptake of the APOE-containing lipoprotein particles. Finally, APOE also has a heparin-binding activity and binds heparan-sulfate proteoglycans on the surface of cells, a property that supports the capture and the receptor-mediated uptake of APOE-containing lipoproteins by cells. A main function of APOE is to mediate lipoprotein clearance through the uptake of chylomicrons, VLDLs, and HDLs by hepatocytes. APOE is also involved in the biosynthesis by the liver of VLDLs as well as their uptake by peripheral tissues ensuring the delivery of triglycerides and energy storage in muscle, heart and adipose tissues. By participating in the lipoprotein-mediated distribution of lipids among tissues, APOE plays a critical role in plasma and tissues lipid homeostasis. APOE is also involved in two steps of reverse cholesterol transport, the HDLs-mediated transport of cholesterol from peripheral tissues to the liver, and thereby plays an important role in cholesterol homeostasis. First, it is functionally associated with ABCA1 in the biogenesis of HDLs in tissues. Second, it is enriched in circulating HDLs and mediates their uptake by hepatocytes. APOE also plays an important role in lipid transport in the central nervous system, regulating neuron survival and sprouting. The chain is Apolipoprotein E (APOE) from Hydrochoerus hydrochaeris (Capybara).